The sequence spans 508 residues: Maturase K (508 aa).

Belongs to the intron maturase 2 family. MatK subfamily.

Its subcellular location is the plastid. It is found in the chloroplast. Its function is as follows. Usually encoded in the trnK tRNA gene intron. Probably assists in splicing its own and other chloroplast group II introns. The protein is Maturase K of Ranunculus lingua (Greater spearwort).